Consider the following 87-residue polypeptide: Small ribosomal subunit protein bS20 (87 aa).

A disordered region spans residues 1 to 21 (MANHKSAEKRARQTIKKTERN).

The protein belongs to the bacterial ribosomal protein bS20 family.

Binds directly to 16S ribosomal RNA. This chain is Small ribosomal subunit protein bS20, found in Campylobacter jejuni subsp. jejuni serotype O:23/36 (strain 81-176).